The chain runs to 94 residues: PqqA binding protein (94 aa).

Belongs to the PqqD family. As to quaternary structure, monomer. Interacts with PqqE.

The protein operates within cofactor biosynthesis; pyrroloquinoline quinone biosynthesis. Its function is as follows. Functions as a PqqA binding protein and presents PqqA to PqqE, in the pyrroloquinoline quinone (PQQ) biosynthetic pathway. The polypeptide is PqqA binding protein (Acinetobacter baumannii (strain SDF)).